A 331-amino-acid polypeptide reads, in one-letter code: 2-hydroxyacid dehydrogenase homolog (331 aa).

Residues 154-155, 234-236, and Asp-260 each bind NAD(+); these read HI and TSR. The active site involves Arg-236. Glu-265 is a catalytic residue. The active-site Proton donor is the His-297. 297–300 contacts NAD(+); the sequence is HQAF.

Belongs to the D-isomer specific 2-hydroxyacid dehydrogenase family.

The polypeptide is 2-hydroxyacid dehydrogenase homolog (ddh) (Zymomonas mobilis subsp. mobilis (strain ATCC 31821 / ZM4 / CP4)).